The sequence spans 478 residues: Glutamate--tRNA ligase (478 aa).

A 'HIGH' region motif is present at residues 9–19 (PSPTGLLHIGT). The 'KMSKS' region motif lies at 248 to 252 (KLSKR). Lys-251 is an ATP binding site.

This sequence belongs to the class-I aminoacyl-tRNA synthetase family. Glutamate--tRNA ligase type 1 subfamily. In terms of assembly, monomer.

Its subcellular location is the cytoplasm. It catalyses the reaction tRNA(Glu) + L-glutamate + ATP = L-glutamyl-tRNA(Glu) + AMP + diphosphate. Catalyzes the attachment of glutamate to tRNA(Glu) in a two-step reaction: glutamate is first activated by ATP to form Glu-AMP and then transferred to the acceptor end of tRNA(Glu). The sequence is that of Glutamate--tRNA ligase from Prochlorococcus marinus subsp. pastoris (strain CCMP1986 / NIES-2087 / MED4).